We begin with the raw amino-acid sequence, 470 residues long: Putative multidrug resistance protein MdtD (470 aa).

Over 1 to 11 (MTELPDNTRWQ) the chain is Periplasmic. Residues 12 to 32 (LWIVAFGFFMQSLDTTIVNTA) form a helical membrane-spanning segment. Residues 33 to 48 (LPSMAKSLGESPLHMH) are Cytoplasmic-facing. Residues 49–69 (MVVVSYVLTVAVMLPASGWLA) traverse the membrane as a helical segment. Over 70 to 76 (DKIGVRN) the chain is Periplasmic. The helical transmembrane segment at 77-97 (IFFAAIVLFTLGSLFCALSGT) threads the bilayer. Residues 98–101 (LNQL) are Cytoplasmic-facing. Residues 102–124 (VLARVLQGVGGAMMVPVGRLTVM) form a helical membrane-spanning segment. Residues 125–137 (KIVPRTQYMAAMT) lie on the Periplasmic side of the membrane. Residues 138 to 158 (FVTLPGQIGPLLGPALGGVLV) form a helical membrane-spanning segment. The Cytoplasmic segment spans residues 159–164 (EYASWH). The helical transmembrane segment at 165-185 (WIFLINIPVGIVGAMATFMLM) threads the bilayer. The Periplasmic segment spans residues 186–196 (PNYTIETRRFD). The helical transmembrane segment at 197 to 217 (LPGFLLLAIGMAVLTLALDGS) threads the bilayer. The Cytoplasmic portion of the chain corresponds to 218–224 (KSMGISP). Residues 225–245 (WTLAGLAAGGAAAILLYLFHA) traverse the membrane as a helical segment. The Periplasmic segment spans residues 246–262 (KKNSGALFSLRLFRTPT). The helical transmembrane segment at 263–283 (FSLGLLGSFAGRIGSGMLPFM) threads the bilayer. The Cytoplasmic segment spans residues 284 to 285 (TP). The chain crosses the membrane as a helical span at residues 286–306 (VFLQIGLGFSPFHAGLMMIPM). The Periplasmic segment spans residues 307–341 (VLGSMGMKRIVVQIVNRFGYRRVLVATTLGLALVS). The chain crosses the membrane as a helical span at residues 342–362 (LLFMSVALLGWYYLLPLVLLL). Topologically, residues 363–395 (QGMVNSARFSSMNTLTLKDLPDTLASSGNSLLS) are cytoplasmic. The helical transmembrane segment at 396 to 416 (MIMQLSMSIGVTIAGMLLGMF) threads the bilayer. Residues 417–430 (GQQHIGIDSSATHH) lie on the Periplasmic side of the membrane. A helical membrane pass occupies residues 431–451 (VFMYTWLCMAVIIALPAIIFA). Residues 452–470 (RVPNDTQQNMVISRRKRSL) lie on the Cytoplasmic side of the membrane.

This sequence belongs to the major facilitator superfamily. TCR/Tet family.

The protein resides in the cell inner membrane. This is Putative multidrug resistance protein MdtD from Salmonella dublin (strain CT_02021853).